We begin with the raw amino-acid sequence, 225 residues long: ATP-dependent Clp protease proteolytic subunit (225 aa).

Catalysis depends on serine 123, which acts as the Nucleophile. Histidine 148 is an active-site residue.

This sequence belongs to the peptidase S14 family. As to quaternary structure, fourteen ClpP subunits assemble into 2 heptameric rings which stack back to back to give a disk-like structure with a central cavity, resembling the structure of eukaryotic proteasomes.

The protein localises to the cytoplasm. It carries out the reaction Hydrolysis of proteins to small peptides in the presence of ATP and magnesium. alpha-casein is the usual test substrate. In the absence of ATP, only oligopeptides shorter than five residues are hydrolyzed (such as succinyl-Leu-Tyr-|-NHMec, and Leu-Tyr-Leu-|-Tyr-Trp, in which cleavage of the -Tyr-|-Leu- and -Tyr-|-Trp bonds also occurs).. In terms of biological role, cleaves peptides in various proteins in a process that requires ATP hydrolysis. Has a chymotrypsin-like activity. Plays a major role in the degradation of misfolded proteins. In Chlorobaculum tepidum (strain ATCC 49652 / DSM 12025 / NBRC 103806 / TLS) (Chlorobium tepidum), this protein is ATP-dependent Clp protease proteolytic subunit.